Reading from the N-terminus, the 167-residue chain is ATP synthase subunit b (167 aa).

A helical transmembrane segment spans residues Thr-10–Phe-30.

It belongs to the ATPase B chain family. F-type ATPases have 2 components, F(1) - the catalytic core - and F(0) - the membrane proton channel. F(1) has five subunits: alpha(3), beta(3), gamma(1), delta(1), epsilon(1). F(0) has three main subunits: a(1), b(2) and c(10-14). The alpha and beta chains form an alternating ring which encloses part of the gamma chain. F(1) is attached to F(0) by a central stalk formed by the gamma and epsilon chains, while a peripheral stalk is formed by the delta and b chains.

It localises to the cell membrane. Functionally, f(1)F(0) ATP synthase produces ATP from ADP in the presence of a proton or sodium gradient. F-type ATPases consist of two structural domains, F(1) containing the extramembraneous catalytic core and F(0) containing the membrane proton channel, linked together by a central stalk and a peripheral stalk. During catalysis, ATP synthesis in the catalytic domain of F(1) is coupled via a rotary mechanism of the central stalk subunits to proton translocation. Its function is as follows. Component of the F(0) channel, it forms part of the peripheral stalk, linking F(1) to F(0). In Alkaliphilus oremlandii (strain OhILAs) (Clostridium oremlandii (strain OhILAs)), this protein is ATP synthase subunit b.